The following is a 321-amino-acid chain: Endochitinase 33 (321 aa).

A signal peptide spans methionine 1 to alanine 19. The 295-residue stretch at glutamine 27–arginine 321 folds into the GH18 domain. Glutamate 167 (proton donor) is an active-site residue.

This sequence belongs to the glycosyl hydrolase 18 family. Chitinase class III subfamily. Monomer.

The protein resides in the secreted. It catalyses the reaction Random endo-hydrolysis of N-acetyl-beta-D-glucosaminide (1-&gt;4)-beta-linkages in chitin and chitodextrins.. Secreted chitinase involved in the degradation of chitin, a component of the cell walls of fungi and exoskeletal elements of some animals (including worms and arthropods). Plays a morphogenetic role during apical growth, cell division and differentiation (cell wall morphogenesis). May be involved in the degradation and further assimilation of phytopathogenic fungi, namely mycoparasitism, the major mechanism accounting for the antagonistic activity against phytopathogenic fungi displayed by Trichoderma. In Trichoderma harzianum (Hypocrea lixii), this protein is Endochitinase 33 (chit33).